Consider the following 88-residue polypeptide: ATP synthase F(0) complex subunit f, mitochondrial (88 aa).

Position 2 is an N-acetylalanine (Ala2). At Ser3 the chain carries Phosphoserine. Residue Lys16 is modified to N6-acetyllysine. Residues 62–79 form a helical membrane-spanning segment; that stretch reads MVLAAYVVFSYCISYKEL.

This sequence belongs to the ATPase F chain family. Component of the ATP synthase complex composed at least of ATP5F1A/subunit alpha, ATP5F1B/subunit beta, ATP5MC1/subunit c (homooctomer), MT-ATP6/subunit a, MT-ATP8/subunit 8, ATP5ME/subunit e, ATP5MF/subunit f, ATP5MG/subunit g, ATP5MK/subunit k, ATP5MJ/subunit j, ATP5F1C/subunit gamma, ATP5F1D/subunit delta, ATP5F1E/subunit epsilon, ATP5PF/subunit F6, ATP5PB/subunit b, ATP5PD/subunit d, ATP5PO/subunit OSCP. ATP synthase complex consists of a soluble F(1) head domain (subunits alpha(3) and beta(3)) - the catalytic core - and a membrane F(0) domain - the membrane proton channel (subunits c, a, 8, e, f, g, k and j). These two domains are linked by a central stalk (subunits gamma, delta, and epsilon) rotating inside the F1 region and a stationary peripheral stalk (subunits F6, b, d, and OSCP).

Its subcellular location is the mitochondrion. It is found in the mitochondrion inner membrane. Its function is as follows. Subunit f, of the mitochondrial membrane ATP synthase complex (F(1)F(0) ATP synthase or Complex V) that produces ATP from ADP in the presence of a proton gradient across the membrane which is generated by electron transport complexes of the respiratory chain. ATP synthase complex consist of a soluble F(1) head domain - the catalytic core - and a membrane F(1) domain - the membrane proton channel. These two domains are linked by a central stalk rotating inside the F(1) region and a stationary peripheral stalk. During catalysis, ATP synthesis in the catalytic domain of F(1) is coupled via a rotary mechanism of the central stalk subunits to proton translocation. In vivo, can only synthesize ATP although its ATP hydrolase activity can be activated artificially in vitro. Part of the complex F(0) domain. This Mus musculus (Mouse) protein is ATP synthase F(0) complex subunit f, mitochondrial.